Reading from the N-terminus, the 293-residue chain is Ribosomal protein L11 methyltransferase (293 aa).

4 residues coordinate S-adenosyl-L-methionine: T145, G166, D188, and N229.

The protein belongs to the methyltransferase superfamily. PrmA family.

It localises to the cytoplasm. The catalysed reaction is L-lysyl-[protein] + 3 S-adenosyl-L-methionine = N(6),N(6),N(6)-trimethyl-L-lysyl-[protein] + 3 S-adenosyl-L-homocysteine + 3 H(+). In terms of biological role, methylates ribosomal protein L11. This is Ribosomal protein L11 methyltransferase from Halorhodospira halophila (strain DSM 244 / SL1) (Ectothiorhodospira halophila (strain DSM 244 / SL1)).